Consider the following 288-residue polypeptide: Intermediate transcription factor 3 small subunit (288 aa).

Belongs to the orthopoxvirus OPG134 family. As to quaternary structure, heterodimer of a 45 kDa (A23R) and a 32 kDa (A8R) subunit to form the virus intermediate transcription factor (VITF)-3.

In terms of biological role, acts with RNA polymerase to initiate transcription from intermediate gene promoters. The chain is Intermediate transcription factor 3 small subunit (OPG134) from Homo sapiens (Human).